Consider the following 166-residue polypeptide: Crossover junction endodeoxyribonuclease RuvC (166 aa).

Active-site residues include aspartate 11, glutamate 70, and aspartate 142. Positions 11, 70, and 142 each coordinate Mg(2+).

The protein belongs to the RuvC family. In terms of assembly, homodimer which binds Holliday junction (HJ) DNA. The HJ becomes 2-fold symmetrical on binding to RuvC with unstacked arms; it has a different conformation from HJ DNA in complex with RuvA. In the full resolvosome a probable DNA-RuvA(4)-RuvB(12)-RuvC(2) complex forms which resolves the HJ. Mg(2+) is required as a cofactor.

It localises to the cytoplasm. It carries out the reaction Endonucleolytic cleavage at a junction such as a reciprocal single-stranded crossover between two homologous DNA duplexes (Holliday junction).. Functionally, the RuvA-RuvB-RuvC complex processes Holliday junction (HJ) DNA during genetic recombination and DNA repair. Endonuclease that resolves HJ intermediates. Cleaves cruciform DNA by making single-stranded nicks across the HJ at symmetrical positions within the homologous arms, yielding a 5'-phosphate and a 3'-hydroxyl group; requires a central core of homology in the junction. The consensus cleavage sequence is 5'-(A/T)TT(C/G)-3'. Cleavage occurs on the 3'-side of the TT dinucleotide at the point of strand exchange. HJ branch migration catalyzed by RuvA-RuvB allows RuvC to scan DNA until it finds its consensus sequence, where it cleaves and resolves the cruciform DNA. This chain is Crossover junction endodeoxyribonuclease RuvC, found in Nitratidesulfovibrio vulgaris (strain ATCC 29579 / DSM 644 / CCUG 34227 / NCIMB 8303 / VKM B-1760 / Hildenborough) (Desulfovibrio vulgaris).